The sequence spans 835 residues: Protein translocase subunit SecA (835 aa).

Residues Gln-85, 103–107, and Asp-495 contribute to the ATP site; that span reads GEGKT. A disordered region spans residues 806–835; it reads KVFLNNDSSDDESSKKRRTRKVRTSKKPWN. Residues 820 to 835 show a composition bias toward basic residues; sequence KKRRTRKVRTSKKPWN.

Belongs to the SecA family. As to quaternary structure, monomer and homodimer. Part of the essential Sec protein translocation apparatus which comprises SecA, SecYEG and auxiliary proteins SecDF. Other proteins may also be involved.

The protein resides in the cell membrane. Its subcellular location is the cytoplasm. It catalyses the reaction ATP + H2O + cellular proteinSide 1 = ADP + phosphate + cellular proteinSide 2.. Functionally, part of the Sec protein translocase complex. Interacts with the SecYEG preprotein conducting channel. Has a central role in coupling the hydrolysis of ATP to the transfer of proteins into and across the cell membrane, serving as an ATP-driven molecular motor driving the stepwise translocation of polypeptide chains across the membrane. The sequence is that of Protein translocase subunit SecA from Onion yellows phytoplasma (strain OY-M).